Here is a 409-residue protein sequence, read N- to C-terminus: MKNMVQRFLKYVTIDTKSDHESESFPSTKSQFDLAKLLVEELKALGLEDAVMDENCYVMATLPSNCNTDKTIPTIGFIAHMDTSPDMSGKDVKPQMVENYDGQDIVLNQEKNIILSPTDFPDLKNYVGKTLITTDGTTLLGADNKAGIAEIISALEYLVQNPEVQHGTIKVAFTPDEEVGHGADRFDVEKFGADFAYTIDGGEIGELEYENFNAAGVKILVHGRNIHPGTAKNRMVNSMEIAMELHAMLPENQKPQYTEGYEGFFLLTGIRGDVEETKCGYIIRDHCKNKFEEKKSLIKNAVDFLNGKYGEGTINLTVTDNYFNMKEKIEPVMHIVETARTAMEEVGVTPIIKPIRGGTDGARLSFMGLPCPNIFTGGHNFHGKYEYICVESMYKATEVILKIIELYSK.

Residue H80 participates in Zn(2+) binding. Residue D82 is part of the active site. D143 lines the Zn(2+) pocket. E177 serves as the catalytic Proton acceptor. 3 residues coordinate Zn(2+): E178, D200, and H382.

Belongs to the peptidase M20B family. Zn(2+) is required as a cofactor.

It localises to the cytoplasm. It carries out the reaction Release of the N-terminal residue from a tripeptide.. Cleaves the N-terminal amino acid of tripeptides. The chain is Peptidase T from Alkaliphilus oremlandii (strain OhILAs) (Clostridium oremlandii (strain OhILAs)).